The primary structure comprises 582 residues: Calcium-dependent protein kinase 24 (582 aa).

The tract at residues 1–36 (MGSCVSSPLKGSPFGKRPVRRRHSSNSRTSSVPRFD) is disordered. Gly2 is lipidated: N-myristoyl glycine. In terms of domain architecture, Protein kinase spans 66-324 (YDLGKELGRG…VQEVLEHPWI (259 aa)). ATP contacts are provided by residues 72–80 (LGRGEFGVT) and Lys95. Catalysis depends on Asp190, which acts as the Proton acceptor. A Phosphoserine modification is found at Ser230. The tract at residues 330-360 (APNVNLGDNVRTKIQQFLLMNRFKKKVLRIV) is autoinhibitory domain. EF-hand domains follow at residues 367 to 402 (EEIA…IGQV), 403 to 438 (VPDG…LKRM), 439 to 474 (GCDE…DKLG), and 478 to 513 (GNDQ…GTDW). Positions 380, 382, 384, 386, 391, 416, 418, 420, 422, 427, 452, 454, 456, 463, 491, 493, 495, and 497 each coordinate Ca(2+). Residue Ser499 is modified to Phosphoserine. Residue Glu502 participates in Ca(2+) binding.

It belongs to the protein kinase superfamily. Ser/Thr protein kinase family. CDPK subfamily.

The protein localises to the membrane. It catalyses the reaction L-seryl-[protein] + ATP = O-phospho-L-seryl-[protein] + ADP + H(+). The enzyme catalyses L-threonyl-[protein] + ATP = O-phospho-L-threonyl-[protein] + ADP + H(+). With respect to regulation, activated by calcium. Autophosphorylation may play an important role in the regulation of the kinase activity. Functionally, may play a role in signal transduction pathways that involve calcium as a second messenger. The chain is Calcium-dependent protein kinase 24 (CPK24) from Arabidopsis thaliana (Mouse-ear cress).